A 370-amino-acid polypeptide reads, in one-letter code: Acyl-CoA:lysophosphatidylglycerol acyltransferase 1 (370 aa).

The helical transmembrane segment at Phe-22–Ile-42 threads the bilayer. The HXXXXD motif signature appears at His-101–Asp-106. Residues Leu-342–Ile-362 traverse the membrane as a helical segment.

It belongs to the 1-acyl-sn-glycerol-3-phosphate acyltransferase family. As to expression, highly expressed in liver and placenta. Also expressed in peripheral blood, lung, kidney and brain. Detected at lower levels in colon. High expression is detected in brain and testis.

The protein localises to the endoplasmic reticulum membrane. It catalyses the reaction a 2-acyl-sn-glycero-3-phosphoethanolamine + octadecanoyl-CoA = 1-octadecanoyl-2-acyl-sn-glycero-3-phosphoethanolamine + CoA. The enzyme catalyses 2-(9Z-octadecenoyl)-sn-glycero-3-phosphoethanolamine + octadecanoyl-CoA = 1-octadecanoyl-2-(9Z-octadecenoyl)-sn-glycero-3-phosphoethanolamine + CoA. The catalysed reaction is a 2-acyl-sn-glycero-3-phosphoethanolamine + hexadecanoyl-CoA = 1-hexadecanoyl-2-acyl-sn-glycero-3-phosphoethanolamine + CoA. It carries out the reaction 2-(9Z-octadecenoyl)-sn-glycero-3-phosphoethanolamine + hexadecanoyl-CoA = 1-hexadecanoyl-2-(9Z-octadecenoyl)-sn-glycero-3-phosphoethanolamine + CoA. It catalyses the reaction 1-tetradecanoyl-sn-glycero-3-phospho-(1'-sn-glycerol) + hexadecanoyl-CoA = 1-tetradecanoyl-2-hexadecanoyl-sn-glycero-3-phospho-(1'-sn-glycerol) + CoA. The enzyme catalyses 1-hexadecanoyl-sn-glycero-3-phospho-(1'-sn-glycerol) + dodecanoyl-CoA = 1-hexadecanoyl-2-dodecanoyl-sn-glycero-3-phospho-(1'-sn-glycerol) + CoA. The catalysed reaction is 1-hexadecanoyl-sn-glycero-3-phospho-(1'-sn-glycerol) + hexadecanoyl-CoA = 1,2-dihexadecanoyl-sn-glycero-3-phospho-(1'-sn-glycerol) + CoA. It carries out the reaction 1-hexadecanoyl-sn-glycero-3-phospho-(1'-sn-glycerol) + octadecanoyl-CoA = 1-hexadecanoyl-2-octadecanoyl-sn-glycero-3-phospho-(1'-sn-glycerol) + CoA. It catalyses the reaction 1-octadecanoyl-sn-glycero-3-phospho-(1'-sn-glycerol) + hexadecanoyl-CoA = 1-octadecanoyl-2-hexadecanoyl-sn-glycero-3-phospho-(1'-sn-glycerol) + CoA. The enzyme catalyses 1-(9Z-octadecenoyl)-sn-glycero-3-phospho-(1'-sn-glycerol) + dodecanoyl-CoA = 1-(9Z-octadecenoyl)-2-dodecanoyl-sn-glycero-3-phospho-(1'-sn-glycerol) + CoA. The catalysed reaction is 1-hexadecanoyl-sn-glycero-3-phospho-(1'-sn-glycerol) + (9Z)-octadecenoyl-CoA = 1-hexadecanoyl-2-(9Z-octadecenoyl)-sn-glycero-3-phospho-(1'-sn-glycerol) + CoA. It carries out the reaction 1-(9Z-octadecenoyl)-sn-glycero-3-phospho-(1'-sn-glycerol) + hexadecanoyl-CoA = 1-(9Z-octadecenoyl)-2-hexadecanoyl-sn-glycero-3-phospho-(1'-sn-glycerol) + CoA. It catalyses the reaction 1-(9Z-octadecenoyl)-sn-glycero-3-phospho-(1'-sn-glycerol) + (9Z)-octadecenoyl-CoA = 1,2-di-(9Z-octadecenoyl)-sn-glycero-3-phospho-(1'-sn-glycerol) + CoA. The enzyme catalyses a 2-acylglycerol + an acyl-CoA = a 1,2-diacylglycerol + CoA. The catalysed reaction is a 2-acylglycerol + hexadecanoyl-CoA = a 1-hexadecanoyl-2-acylglycerol + CoA. It carries out the reaction a 1-acylglycerol + hexadecanoyl-CoA = an hexadecanoyl-acylglycerol + CoA. It catalyses the reaction a 2-acyl-sn-glycero-3-phosphocholine + an acyl-CoA = a 1,2-diacyl-sn-glycero-3-phosphocholine + CoA. The enzyme catalyses 2-(9Z-octadecenoyl)-sn-glycero-3-phosphocholine + octadecanoyl-CoA = 1-octadecanoyl-2-(9Z-octadecenoyl)-sn-glycero-3-phosphocholine + CoA. The catalysed reaction is 2-(9Z,12Z-octadecadienoyl)-sn-glycero-3-phosphocholine + octadecanoyl-CoA = 1-octadecanoyl-2-(9Z,12Z)-octadecadienoyl-sn-glycero-3-phosphocholine + CoA. It carries out the reaction 2-(5Z,8Z,11Z,14Z)-eicosatetraenoyl-sn-glycero-3-phosphocholine + octadecanoyl-CoA = 1-octadecanoyl-2-(5Z,8Z,11Z,14Z-eicosatetraenoyl)-sn-glycero-3-phosphocholine + CoA. It catalyses the reaction 2-(9Z-octadecenoyl)-sn-glycero-3-phosphocholine + hexadecanoyl-CoA = 1-hexadecanoyl-2-(9Z-octadecenoyl)-sn-glycero-3-phosphocholine + CoA. The enzyme catalyses 2-(9Z-octadecenoyl)-sn-glycero-3-phospho-L-serine + hexadecanoyl-CoA = 1-hexadecanoyl-2-(9Z-octadecenoyl)-sn-glycero-3-phospho-L-serine + CoA. The catalysed reaction is 2-(4Z,7Z,10Z,13Z,16Z,19Z-docosahexaenoyl)-sn-glycero-3-phosphocholine + octadecanoyl-CoA = 1-octadecanoyl-2-(4Z,7Z,10Z,13Z,16Z,19Z-docosahexaenoyl)-sn-glycero-3-phosphocholine + CoA. It carries out the reaction 1-(9Z-octadecenoyl)-sn-glycero-3-phospho-L-serine + octadecanoyl-CoA = 1-(9Z-octadecenoyl)-2-octadecanoyl-sn-glycero-3-phospho-L-serine + CoA. It catalyses the reaction a 2-acyl-sn-glycero-3-phosphoethanolamine + a fatty acyl-CoA = a 1,2-diacyl-sn-glycero-3-phosphoethanolamine + CoA. In terms of biological role, lysophospholipid acyltransferase involved in fatty acyl chain remodeling of glycerophospholipids in the endoplasmic reticulum membrane. Selectively catalyzes the transfer and esterification of saturated long-chain fatty acids from acyl-CoA to the sn-1 position of 1-lyso-2-acyl phosphatidylethanolamines (1-lyso-PE, LPE), with a preference for stearoyl CoA over palmitoyl CoA as acyl donor. Acts in concert with an unknown phospholipase A1 to convert palmitate phosphatidylethanolamine (PE) species into stearate ones. Provides substrates to the PE methylation pathway, controlling stearate/palmitate composition of PE and phosphatidylcholine (PC) species with an overall impact on de novo hepatic lipid synthesis, body fat content and life span. Can acylate lysophosphatidylglycerols (LPG) using various saturated fatty acyl-CoAs as acyl donors. Can also acylate monoacylglycerols with a preference for 2-monoacylglycerols over 1-monoacylglycerols. Has no activity toward lysophosphatidic acids (LPA). The polypeptide is Acyl-CoA:lysophosphatidylglycerol acyltransferase 1 (Homo sapiens (Human)).